Reading from the N-terminus, the 223-residue chain is Carnitine transport permease protein OpuCD (223 aa).

In terms of domain architecture, ABC transmembrane type-1 spans 22-202 (FWRHFLMSAY…VMAILADVLL (181 aa)). A run of 5 helical transmembrane segments spans residues 27–47 (LMSA…GVYI), 63–83 (IIQT…MGLG), 87–107 (VVLS…YTGI), 148–168 (ALVI…GGLG), and 182–202 (AIIL…DVLL).

It belongs to the binding-protein-dependent transport system permease family. The complex is composed of two ATP-binding proteins (OpuCA), two transmembrane proteins (OpuCB and OpuCD) and a solute-binding protein (OpuCC).

Its subcellular location is the cell membrane. Its function is as follows. Part of the ABC transporter complex OpuCABCD involved in carnitine uptake. Probably responsible for the translocation of the substrate across the membrane. Involved, with BetL and GbuABC, in osmoprotection and cryoprotection of Listeria. Can also mediate weak glycine betaine transport. This is Carnitine transport permease protein OpuCD (opuCD) from Listeria monocytogenes serotype 1/2a (strain 10403S).